A 161-amino-acid polypeptide reads, in one-letter code: Endoribonuclease YbeY (161 aa).

Residues His-127, His-131, and His-137 each coordinate Zn(2+).

This sequence belongs to the endoribonuclease YbeY family. Zn(2+) is required as a cofactor.

The protein localises to the cytoplasm. Its function is as follows. Single strand-specific metallo-endoribonuclease involved in late-stage 70S ribosome quality control and in maturation of the 3' terminus of the 16S rRNA. This chain is Endoribonuclease YbeY, found in Listeria innocua serovar 6a (strain ATCC BAA-680 / CLIP 11262).